The following is an 814-amino-acid chain: Oxysterol-binding protein-related protein 1C (814 aa).

Positions 103-235 (GNGIAGILYK…WVEALQAVKD (133 aa)) constitute a PH domain. Residues 300–367 (LLIDTLRQLE…AEEEFDEEEN (68 aa)) are a coiled coil. 2 disordered regions span residues 319–366 (VVDE…DEEE) and 379–411 (SSFKSSGSGFRTSSFSSDEDGFESEDDIDPSIK). Residues 347 to 366 (ESDDDNERGDAAEEEFDEEE) show a composition bias toward acidic residues. Residues 379–394 (SSFKSSGSGFRTSSFS) show a composition bias toward low complexity. A compositionally biased stretch (acidic residues) spans 395–407 (SDEDGFESEDDID).

The protein belongs to the OSBP family. Expressed in roots, leaves, stems, flowers and pollen.

May be involved in the transport of sterols. In Arabidopsis thaliana (Mouse-ear cress), this protein is Oxysterol-binding protein-related protein 1C (ORP1C).